We begin with the raw amino-acid sequence, 246 residues long: Bis(5'-nucleosyl)-tetraphosphatase PrpE [asymmetrical] (246 aa).

It belongs to the PrpE family. The cofactor is Ni(2+).

The enzyme catalyses P(1),P(4)-bis(5'-guanosyl) tetraphosphate + H2O = GMP + GTP + 2 H(+). Asymmetrically hydrolyzes Ap4p to yield AMP and ATP. The chain is Bis(5'-nucleosyl)-tetraphosphatase PrpE [asymmetrical] from Bacillus thuringiensis subsp. konkukian (strain 97-27).